We begin with the raw amino-acid sequence, 1180 residues long: IQ domain-containing protein N (1180 aa).

A disordered region spans residues 34–78 (HPPAPAHPSLLDKMEKAPPQPQHEGLKSKEHLPQQPAEGKTASRR). Residues 103–132 (HARAATLIQANWRGYWLRQKLISQMMAAKA) enclose the IQ 1 domain. Disordered stretches follow at residues 283 to 324 (RVSA…ETPK), 476 to 496 (MSKTSSQRSPVGVTKPSPQTR), and 786 to 820 (QRLGGLSAPPWAKPEDRQTQPQPHGHVPGKTTQGG). IQ domains lie at 926-955 (RILAVITIQAGVRGYLARRRIRLWHRGAMV), 956-978 (IQATWRGYRVRRNLAHLCRATTT), 979-1001 (IQSAWRGYSTRRDQARHWQMLHP), 1113-1142 (QDKAATAIQSAWRGFKIRQQMRQQQMAAKI), and 1143-1165 (VQATWRGHHTRSCLKNTEALLGP).

As to quaternary structure, interacts with calmodulin.

Its function is as follows. Essential for spermiogenesis and fertilization. May be required for manchette assembly in elongating spermatids. This is IQ domain-containing protein N from Homo sapiens (Human).